Consider the following 323-residue polypeptide: o-succinylbenzoate synthase (323 aa).

Catalysis depends on Lys-134, which acts as the Proton donor. Mg(2+)-binding residues include Asp-162, Glu-191, and Asp-214. Lys-236 serves as the catalytic Proton acceptor.

The protein belongs to the mandelate racemase/muconate lactonizing enzyme family. MenC type 1 subfamily. Requires a divalent metal cation as cofactor.

It carries out the reaction (1R,6R)-6-hydroxy-2-succinyl-cyclohexa-2,4-diene-1-carboxylate = 2-succinylbenzoate + H2O. Its pathway is quinol/quinone metabolism; 1,4-dihydroxy-2-naphthoate biosynthesis; 1,4-dihydroxy-2-naphthoate from chorismate: step 4/7. The protein operates within quinol/quinone metabolism; menaquinone biosynthesis. Functionally, converts 2-succinyl-6-hydroxy-2,4-cyclohexadiene-1-carboxylate (SHCHC) to 2-succinylbenzoate (OSB). This Pectobacterium atrosepticum (strain SCRI 1043 / ATCC BAA-672) (Erwinia carotovora subsp. atroseptica) protein is o-succinylbenzoate synthase.